The following is an 858-amino-acid chain: Heat shock protein 105 kDa (858 aa).

S2 carries the post-translational modification N-acetylserine. K471 is modified (N6-acetyllysine). 2 disordered regions span residues 500–584 (KVPT…PPEA) and 796–858 (CEPV…MDLD). Residues 504 to 514 (EENEMSSEADM) are compositionally biased toward acidic residues. S509 and S510 each carry phosphoserine. Polar residues predominate over residues 532-554 (QQDNSEAGTQPQVQTDAQQTSQS). S557 bears the Phosphoserine mark. A Phosphothreonine modification is found at T561. Composition is skewed to basic and acidic residues over residues 563 to 584 (EENK…PPEA) and 805 to 814 (PKIESPKLER). S809 carries the post-translational modification Phosphoserine. T815 bears the Phosphothreonine mark. Positions 821–832 (IDKKEEDLEDKN) are enriched in basic and acidic residues. Polar residues predominate over residues 849–858 (EKNSVNMDLD).

The protein belongs to the heat shock protein 70 family. Interacts with HSPA8/HSC70. Interacts with HSPA1A (via NBD) and HSPA1B (via NBD). Post-translationally, phosphorylation on Ser-509 may be important for regulation of the HSPA8/HSC70 chaperone activity. As to expression, highly expressed in testis. Present at lower levels in most brain regions, except cerebellum. Overexpressed in cancer cells.

Its subcellular location is the cytoplasm. Acts as a nucleotide-exchange factor (NEF) for chaperone proteins HSPA1A and HSPA1B, promoting the release of ADP from HSPA1A/B thereby triggering client/substrate protein release. Prevents the aggregation of denatured proteins in cells under severe stress, on which the ATP levels decrease markedly. Inhibits HSPA8/HSC70 ATPase and chaperone activities. This is Heat shock protein 105 kDa (HSPH1) from Homo sapiens (Human).